The sequence spans 305 residues: Protein MFI (305 aa).

In terms of assembly, can homodimerize. Interacts with MFF; the interaction inhibits MFF interaction with DNM1L.

The protein resides in the cytoplasm. The protein localises to the cytosol. Its subcellular location is the mitochondrion outer membrane. Its function is as follows. Acts as an inhibitor of mitochondrial fission. Interacts with MFF and prevents DNM1L recruitment to mitochondria, promoting a more fused mitochondrial network. The protein is Protein MFI of Rattus norvegicus (Rat).